The sequence spans 227 residues: PKHD-type hydroxylase Neut_0373 (227 aa).

One can recognise a Fe2OG dioxygenase domain in the interval 78-179; the sequence is KIMPPFFNRY…RIACFMFIQS (102 aa). Fe cation-binding residues include His-97, Asp-99, and His-160. Arg-170 lines the 2-oxoglutarate pocket.

Fe(2+) is required as a cofactor. It depends on L-ascorbate as a cofactor.

In Nitrosomonas eutropha (strain DSM 101675 / C91 / Nm57), this protein is PKHD-type hydroxylase Neut_0373.